A 323-amino-acid chain; its full sequence is O-phosphoserine sulfhydrylase (323 aa).

Residue Lys51 is modified to N6-(pyridoxal phosphate)lysine. Pyridoxal 5'-phosphate is bound by residues Asn81 and 184 to 188; that span reads GTTGT. Substrate is bound at residue Arg220. Ser265 contacts pyridoxal 5'-phosphate.

This sequence belongs to the cysteine synthase/cystathionine beta-synthase family. In terms of assembly, homodimer. Pyridoxal 5'-phosphate is required as a cofactor.

The enzyme catalyses [CysO sulfur-carrier protein]-C-terminal-Gly-aminoethanethioate + O-phospho-L-serine + H(+) = [CysO sulfur-carrier protein]-Gly-NH-CH2-C(O)-S-L-Cys + phosphate. It participates in amino-acid biosynthesis; L-cysteine biosynthesis. In terms of biological role, catalyzes the formation of a covalent CysO-cysteine adduct via a sulfur transfer, using the thiocarboxylated sulfur carrier protein CysO-COSH as sulfur donor and O-phospho-L-serine (OPS) as sulfur acceptor. Can also use sodium sulfide as sulfur donor in vitro, albeit with less efficiency. This chain is O-phosphoserine sulfhydrylase (cysM), found in Mycobacterium bovis (strain ATCC BAA-935 / AF2122/97).